Here is a 504-residue protein sequence, read N- to C-terminus: Maturase K (504 aa).

This sequence belongs to the intron maturase 2 family. MatK subfamily.

The protein localises to the plastid. It localises to the chloroplast. In terms of biological role, usually encoded in the trnK tRNA gene intron. Probably assists in splicing its own and other chloroplast group II introns. This is Maturase K from Calyptranthes pallens (Spicewood).